The following is a 727-amino-acid chain: DNA replication licensing factor MCM5 (727 aa).

Positions 325–531 constitute an MCM domain; it reads VYKNICTKIA…SQDKEIASHI (207 aa). Residue 375 to 382 coordinates ATP; that stretch reads GDPSTAKS. The Arginine finger motif lies at 507–510; the sequence is SRFD.

This sequence belongs to the MCM family. In terms of assembly, component of the minichromosome maintenance (MCM) complex, a heterotetramer composed of MCM2, MCM3, MCM4, MCM5, MCM6 and MCM7. Interacts with EGT1. As to expression, expressed in shoot apex and flower buds.

Its subcellular location is the nucleus. It localises to the cytoplasm. It carries out the reaction ATP + H2O = ADP + phosphate + H(+). In terms of biological role, probable component of the MCM2-7 complex (MCM complex) that may function as a DNA helicase and which is essential to undergo a single round of replication initiation and elongation per cell cycle in eukaryotic cells. This Arabidopsis thaliana (Mouse-ear cress) protein is DNA replication licensing factor MCM5 (MCM5).